The sequence spans 228 residues: Core-capsid bridging protein (228 aa).

The interval 146–177 is disordered; it reads ARPPAARISPPRRRRRRRRSPRPRATAAYRSS. Residues 155–167 are compositionally biased toward basic residues; that stretch reads PPRRRRRRRRSPR. Residues 168–177 show a composition bias toward low complexity; the sequence is PRATAAYRSS.

Belongs to the adenoviridae core-capsid bridging protein family. Monomer. Homodimer. Exists in equilibrium between monomers and dimers in solution. Interacts with the histone-like nucleoprotein; this interactions bridge the virus core to the capsid. Interacts with core protein X; this interactions bridge the virus core to the capsid. Interacts with the endosome lysis protein VI; this interactions bridge the virus core to the capsid. Interacts with the peripentonal hexons. Interacts with host NPM1; this interaction might play a role in virus assembly.

The protein localises to the virion. It localises to the host nucleus. It is found in the host nucleolus. Functionally, associates loosely with the viral DNA to form an outer shell around the nucleoprotein-DNA complex and links it with the capsid by binding the endosome lysis protein. Dissociates from the viral genome during entry. Might be involved in nuclear capsid assembly of the viral particles through its association with NPM1/nucleophosmin. The polypeptide is Core-capsid bridging protein (Murine adenovirus A serotype 1 (MAdV-1)).